A 578-amino-acid chain; its full sequence is Isocitrate dehydrogenase kinase/phosphatase (578 aa).

Residues 315 to 321 (APGIRGM) and K336 each bind ATP. The active site involves D371.

This sequence belongs to the AceK family.

The protein localises to the cytoplasm. It catalyses the reaction L-seryl-[isocitrate dehydrogenase] + ATP = O-phospho-L-seryl-[isocitrate dehydrogenase] + ADP + H(+). Bifunctional enzyme which can phosphorylate or dephosphorylate isocitrate dehydrogenase (IDH) on a specific serine residue. This is a regulatory mechanism which enables bacteria to bypass the Krebs cycle via the glyoxylate shunt in response to the source of carbon. When bacteria are grown on glucose, IDH is fully active and unphosphorylated, but when grown on acetate or ethanol, the activity of IDH declines drastically concomitant with its phosphorylation. The chain is Isocitrate dehydrogenase kinase/phosphatase from Escherichia coli (strain ATCC 8739 / DSM 1576 / NBRC 3972 / NCIMB 8545 / WDCM 00012 / Crooks).